We begin with the raw amino-acid sequence, 115 residues long: Replication initiation control protein YabA (115 aa).

4 residues coordinate Zn(2+): histidine 90, cysteine 92, cysteine 106, and cysteine 109.

Belongs to the YabA family. In terms of assembly, homotetramer. Interacts with both DnaA and DnaN, acting as a bridge between these two proteins. Requires Zn(2+) as cofactor.

It localises to the cytoplasm. The protein localises to the nucleoid. In terms of biological role, involved in control of chromosome replication initiation. Inhibits the cooperative binding of DnaA to the oriC region, thus negatively regulating initiation of chromosome replication. Inhibits the ability of DnaA-ATP to form a helix on DNA; does not disassemble preformed DnaA-DNA helices. Decreases the residence time of DnaA on the chromosome at its binding sites (oriC, replication forks and promoter-binding sites). Tethers DnaA to the replication machinery via the DNA polymerase beta sliding clamp subunit (dnaN). Associates with oriC and other DnaA targets on the chromosome in a DnaA-dependent manner. This chain is Replication initiation control protein YabA, found in Staphylococcus epidermidis (strain ATCC 35984 / DSM 28319 / BCRC 17069 / CCUG 31568 / BM 3577 / RP62A).